Reading from the N-terminus, the 358-residue chain is Ganglioside-induced differentiation-associated protein 1 (358 aa).

A GST N-terminal domain is found at 24–105 (VKLILYHWTH…YLEQTFLDEK (82 aa)). Residues Lys-50, Lys-172, Lys-173, Lys-188, and Lys-190 each participate in a glycyl lysine isopeptide (Lys-Gly) (interchain with G-Cter in ubiquitin) cross-link. One can recognise a GST C-terminal domain in the interval 153-309 (PAYATTRIRS…LISAVLPTAF (157 aa)). Lys-203 bears the N6-acetyllysine; alternate mark. A Glycyl lysine isopeptide (Lys-Gly) (interchain with G-Cter in ubiquitin); alternate cross-link involves residue Lys-203. Residues Lys-206, Lys-207, and Lys-214 each participate in a glycyl lysine isopeptide (Lys-Gly) (interchain with G-Cter in ubiquitin) cross-link. 2 helical membrane passes run 292–312 (VLGHVNNILISAVLPTAFRVA) and 320–340 (LGTTLVVGLLAGMGYFAFMLF). The segment at 320–358 (LGTTLVVGLLAGMGYFAFMLFRKRLGSMILALRPRPNYF) is required for mitochondrial localization.

It belongs to the GST superfamily. As to quaternary structure, homodimer. Post-translationally, ubiquitinated by PRKN during mitophagy, leading to its degradation and enhancement of mitophagy. Deubiquitinated by USP30.

Its subcellular location is the mitochondrion outer membrane. It localises to the cytoplasm. Its function is as follows. Regulates the mitochondrial network by promoting mitochondrial fission. This chain is Ganglioside-induced differentiation-associated protein 1 (GDAP1), found in Bos taurus (Bovine).